The sequence spans 426 residues: High affinity 3',5'-cyclic-AMP phosphodiesterase 7A (426 aa).

A PDEase domain is found at 80 to 402 (LDEDYNGQAK…ASWKGLQRQQ (323 aa)). Residue histidine 156 is the Proton donor of the active site. The a divalent metal cation site is built by histidine 160, histidine 196, aspartate 197, and aspartate 306.

The protein belongs to the cyclic nucleotide phosphodiesterase family. PDE7 subfamily. In terms of assembly, interacts with CBFA2T3. A divalent metal cation is required as a cofactor.

The protein localises to the cytoplasm. Its subcellular location is the cytosol. The catalysed reaction is 3',5'-cyclic AMP + H2O = AMP + H(+). It functions in the pathway purine metabolism; 3',5'-cyclic AMP degradation; AMP from 3',5'-cyclic AMP: step 1/1. In terms of biological role, hydrolyzes the second messenger cAMP, which is a key regulator of many important physiological processes. May have a role in muscle signal transduction. This Rattus norvegicus (Rat) protein is High affinity 3',5'-cyclic-AMP phosphodiesterase 7A (Pde7a).